The chain runs to 508 residues: uncharacterized protein (508 aa).

A run of 12 helical transmembrane segments spans residues 65-87 (IFPV…SYAV), 104-124 (WSGT…SLLL), 136-156 (FLVI…PGFI), 160-180 (VLLG…TAQW), 192-212 (VWVA…YGLA), 224-244 (LIFI…LAVV), 292-312 (TWIM…IGTF), 333-353 (LPAG…SLFI), 357-377 (MVLA…LSFA), 384-404 (LAGY…FAII), 416-436 (TVGV…PQTF), and 450-470 (TMVG…YVNW).

Belongs to the major facilitator superfamily. Allantoate permease family.

The protein resides in the endoplasmic reticulum. It is found in the golgi apparatus. Its subcellular location is the membrane. This is an uncharacterized protein from Schizosaccharomyces pombe (strain 972 / ATCC 24843) (Fission yeast).